Reading from the N-terminus, the 152-residue chain is MDPGTEEYELNGDLRPGSPGSPDASPPRWGLRNRPINVNHYANKKSAAESMLDIALLMANASQLKAVVEQGNEFAFFVPLVVLISISLVLQIGVGVLLIFLVKYDLNNPAKHAKLDFLNNLATGLVFIIVVVNIFITAFGVQKPVMDVAPRQ.

An N-acetylmethionine modification is found at methionine 1. Residues 1-10 are compositionally biased toward acidic residues; sequence MDPGTEEYEL. The interval 1-30 is disordered; it reads MDPGTEEYELNGDLRPGSPGSPDASPPRWG. Residues 1 to 78 lie on the Extracellular side of the membrane; it reads MDPGTEEYEL…EQGNEFAFFV (78 aa). The span at 16–27 shows a compositional bias: low complexity; that stretch reads PGSPGSPDASPP. Serine 18, serine 21, and serine 25 each carry phosphoserine. The N-terminal adhesion motif stretch occupies residues 26–37; sequence PPRWGLRNRPIN. Residues 40–69 form a required to induce plasma membrane rupture region; that stretch reads HYANKKSAAESMLDIALLMANASQLKAVVE. The interval 44–55 is helix alpha1; the sequence is KKSAAESMLDIA. The tract at residues 58 to 74 is helix alpha2; it reads MANASQLKAVVEQGNEF. Asparagine 60 carries an N-linked (GlcNAc...) asparagine glycan. Residues 79-103 traverse the membrane as a helical segment; that stretch reads PLVVLISISLVLQIGVGVLLIFLVK. The Cytoplasmic portion of the chain corresponds to 104-113; that stretch reads YDLNNPAKHA. The chain crosses the membrane as a helical span at residues 114 to 138; it reads KLDFLNNLATGLVFIIVVVNIFITA. The Extracellular segment spans residues 139–152; that stretch reads FGVQKPVMDVAPRQ.

It belongs to the ninjurin family. Homodimer; in absence of death stimuli, forms an inactive homodimer. Homooligomer; in response to death stimuli, homooligomerizes into long, highly branched filaments and large, ring-shaped structures in the membrane. The topology shown in the entry corresponds to the activated form. Cleaved by MMP9 protease to generate the Secreted ninjurin-1 form. Post-translationally, N-linked glycosylation is required for homooligomerization.

It is found in the cell membrane. Its subcellular location is the synaptic cell membrane. It localises to the secreted. In response to death stimuli, homooligomerizes and disrupts membrane integrity by introducing the hydrophilic faces of alpha1 and alpha2 helices into the hydrophobic membrane. Homooligomerization and ability to mediate plasma membrane rupture is inhibited by glycine; it is unclear whether glycine directly or indirectly inhibits homooligomerization. In normal conditions, NINJ1 is autoinhibited via formation of a homodimer: in the inactive homodimer, the alpha1 and alpha2 helices (residues 44-74) form a single transmembrane region without a kink, in which hydrophilic faces of alpha1 and alpha2 helices are sequestered. Effector of various programmed cell death, such as pyroptosis and necroptosis, which mediates plasma membrane rupture (cytolysis). Oligomerizes in response to death stimuli and forms ring-like structures on the plasma membrane: acts by cutting and shedding membrane disks, like a cookie cutter, leading to membrane damage and loss that cannot be repaired by the cell. Plasma membrane rupture leads to release intracellular molecules named damage-associated molecular patterns (DAMPs) that propagate the inflammatory response. Mechanistically, mediates plasma membrane rupture by introducing hydrophilic faces of 2 alpha helices into the hydrophobic membrane. Induces plasma membrane rupture downstream of Gasdermin (GSDMA, GSDMB, GSDMC, GSDMD, or GSDME) or MLKL during pyroptosis or necroptosis, respectively. Acts as an effector of PANoptosis downstream of CASP1, CASP4, CASP8 and RIPK3. Also induces plasma membrane rupture in response to cell swelling caused by osmotic stress and ferroptosis downstream of lipid peroxidation. Acts as a regulator of Toll-like receptor 4 (TLR4) signaling triggered by lipopolysaccharide (LPS) during systemic inflammation; directly binds LPS. Involved in leukocyte migration during inflammation by promoting transendothelial migration of macrophages via homotypic binding. Promotes the migration of monocytes across the brain endothelium to central nervous system inflammatory lesions. Also acts as a homophilic transmembrane adhesion molecule involved in various processes such as axonal growth, cell chemotaxis and angiogenesis. Promotes cell adhesion by mediating homophilic interactions via its extracellular N-terminal adhesion motif (N-NAM). Involved in the progression of the inflammatory stress by promoting cell-to-cell interactions between immune cells and endothelial cells. Plays a role in nerve regeneration by promoting maturation of Schwann cells. Acts as a regulator of angiogenesis. Promotes the formation of new vessels by mediating the interaction between capillary pericyte cells and endothelial cells. Promotes osteoclasts development by enhancing the survival of prefusion osteoclasts. Also involved in striated muscle growth and differentiation. Its function is as follows. Secreted form generated by cleavage, which has chemotactic activity. Acts as an anti-inflammatory mediator by promoting monocyte recruitment, thereby ameliorating atherosclerosis. This Rattus norvegicus (Rat) protein is Ninjurin-1.